The primary structure comprises 630 residues: Beta-phellandrene synthase, chloroplastic (630 aa).

The transit peptide at 1–48 (MALVSSAPKSCLHKSLIRSTHHELKPLRRTIPTLGMCRRGKSFTPSVS) directs the protein to the chloroplast. 3 residues coordinate Mg(2+): Asp381, Asp385, and Asp533. Positions 381–385 (DDIYD) match the DDXXD motif motif.

Belongs to the terpene synthase family. Tpsd subfamily. Requires Mg(2+) as cofactor. Mn(2+) is required as a cofactor. K(+) serves as cofactor.

The protein resides in the plastid. Its subcellular location is the chloroplast. It catalyses the reaction (2E)-geranyl diphosphate = (-)-beta-phellandrene + diphosphate. It functions in the pathway terpene metabolism; oleoresin biosynthesis. Its function is as follows. Converts geranyl diphosphate to four products with (-)-(4S)-beta-phellandrene (52%) as the major olefin, and lesser amounts of (-)-(1S,5S)-beta-pinene (34%), (-)-1S,5S-alpha-pinene (8.5%), and (-)-(4S)-limonene (6%). Involved in defensive oleoresin formation in conifers in response to insect attack or other injury. Involved in monoterpene (C10) olefins biosynthesis. This chain is Beta-phellandrene synthase, chloroplastic (ag8), found in Abies grandis (Grand fir).